Here is a 134-residue protein sequence, read N- to C-terminus: Small ribosomal subunit protein uS11 (134 aa).

Belongs to the universal ribosomal protein uS11 family. As to quaternary structure, part of the 30S ribosomal subunit. Interacts with proteins S7 and S18. Binds to IF-3.

Its function is as follows. Located on the platform of the 30S subunit, it bridges several disparate RNA helices of the 16S rRNA. Forms part of the Shine-Dalgarno cleft in the 70S ribosome. This Corynebacterium jeikeium (strain K411) protein is Small ribosomal subunit protein uS11.